A 495-amino-acid chain; its full sequence is UDP-glycosyltransferase 73C13 (495 aa).

Residue histidine 24 is the Proton acceptor of the active site. An anthocyanidin is bound at residue histidine 24. Catalysis depends on aspartate 129, which acts as the Charge relay. Alanine 356, glutamine 358, histidine 373, tryptophan 376, asparagine 377, serine 378, and glutamate 381 together coordinate UDP-alpha-D-glucose. Alanine 396 serves as a coordination point for an anthocyanidin. The UDP-alpha-D-glucose site is built by aspartate 397 and glutamine 398.

Belongs to the UDP-glycosyltransferase family.

It carries out the reaction oleanolate + UDP-alpha-D-glucose = oleanolate 3-O-beta-D-glucoside + UDP + H(+). Functionally, catalyzes the transfer of a glucose (Glc) moiety from UDP-Glc to the C-3 position of the oleanane sapogenins oleanolate and hederagenin, and to the C-28 carboxylic group of the lupane sapogenin betulinate. The monoglucosylated hederagenin 3-O-beta-D-glucoside is a feeding deterrent of the yellow-striped flea beetle (Phyllotreta nemorum). This chain is UDP-glycosyltransferase 73C13, found in Barbarea vulgaris (Yellow rocket).